Reading from the N-terminus, the 43-residue chain is Large ribosomal subunit protein uL5 (43 aa).

The protein belongs to the universal ribosomal protein uL5 family. In terms of assembly, part of the 50S ribosomal subunit; part of the 5S rRNA/L5/L18/L25 subcomplex. Contacts the 5S rRNA and the P site tRNA. Forms a bridge to the 30S subunit in the 70S ribosome.

Functionally, this is one of the proteins that bind and probably mediate the attachment of the 5S RNA into the large ribosomal subunit, where it forms part of the central protuberance. In the 70S ribosome it contacts protein S13 of the 30S subunit (bridge B1b), connecting the 2 subunits; this bridge is implicated in subunit movement. Contacts the P site tRNA; the 5S rRNA and some of its associated proteins might help stabilize positioning of ribosome-bound tRNAs. This is Large ribosomal subunit protein uL5 (rplE) from Proteus vulgaris.